A 41-amino-acid polypeptide reads, in one-letter code: Hadrurin (41 aa).

Belongs to the non-disulfide-bridged peptide (NDBP) superfamily. Long chain multifunctional peptide (group 2) family. Expressed by the venom gland.

Its subcellular location is the secreted. Functionally, antimicrobial activity against S.typhimurium, K.pneumoniae, E.cloacae, P.aeruginosa, E.coli and S.marcescens. Also shows hemolytic activity when tested in human erythrocytes. This chain is Hadrurin, found in Hoffmannihadrurus aztecus (Mexican scorpion).